Here is a 101-residue protein sequence, read N- to C-terminus: CLAVATA3/ESR (CLE)-related protein 18 (101 aa).

The signal sequence occupies residues 1–25 (MHLLKGGVVLIITLILFLITSSIVA). The interval 37 to 58 (RQIPTGPDPLHNPPQPSPKHHH) is disordered. Pro40 and Pro43 each carry hydroxyproline. The span at 42-53 (GPDPLHNPPQPS) shows a compositional bias: pro residues. The O-linked (Ara...) hydroxyproline glycan is linked to Pro43. The residue at position 76 (Tyr76) is a Sulfotyrosine. Hydroxyproline is present on Pro84.

This sequence belongs to the CLV3/ESR signal peptide family. The tyrosine sulfation is critical for the function of the peptide. In terms of processing, the O-glycosylation (arabinosylation) of the hydroxyproline Pro-43 enhances binding affinity of the CLE18p peptide for its receptor. Expressed in roots, leaves, siliques and seedlings.

It localises to the secreted. It is found in the extracellular space. Root growth factor that regulates the pattern of root growth and lateral root development by modulating the length and the number of cortical cells in the root apical meristem (RAM), and the anticlinal asymmetric cell divisions in lateral root initiation cells. Functionally, extracellular signal peptide that regulates cell fate. Represses root apical meristem maintenance. Root growth factor that regulates the pattern of root growth and lateral root development. Regulates the transition of protophloem cells from proliferation to differentiation, thus impinging on postembryonic growth capacity of the root meristem; this signaling pathway requires CRN and CLV2. This is CLAVATA3/ESR (CLE)-related protein 18 from Arabidopsis thaliana (Mouse-ear cress).